A 545-amino-acid polypeptide reads, in one-letter code: Threonine--tRNA ligase catalytic subunit (545 aa).

The interval 139–433 is catalytic; that stretch reads DHRLIGEKLD…LLEHFKGKLP (295 aa). Zn(2+) is bound by residues Cys-231, His-282, and His-410.

The protein belongs to the class-II aminoacyl-tRNA synthetase family. In terms of assembly, homodimer. Probably interacts with its editing subunit. The cofactor is Zn(2+).

The protein resides in the cytoplasm. The catalysed reaction is tRNA(Thr) + L-threonine + ATP = L-threonyl-tRNA(Thr) + AMP + diphosphate + H(+). Catalyzes the attachment of threonine to tRNA(Thr) in a two-step reaction: L-threonine is first activated by ATP to form Thr-AMP and then transferred to the acceptor end of tRNA(Thr). Also activates L-serine and transfers it to tRNA(Thr) but cannot deacylate incorrectly charged amino acid; unlike most archaea the editing function is found in a freestanding protein. This chain is Threonine--tRNA ligase catalytic subunit, found in Saccharolobus islandicus (strain M.16.4 / Kamchatka #3) (Sulfolobus islandicus).